A 211-amino-acid chain; its full sequence is Beta-crystallin B3 (211 aa).

Positions 1-21 (MTEQQSPPEQMVTGEGAGERG) are disordered. Positions 1–23 (MTEQQSPPEQMVTGEGAGERGGN) are N-terminal arm. Beta/gamma crystallin 'Greek key' domains are found at residues 24 to 63 (YKIT…QVES) and 64 to 108 (GPWL…RPLQ). Residues 109 to 113 (IDSPD) are connecting peptide. 2 consecutive Beta/gamma crystallin 'Greek key' domains span residues 114–155 (HKIH…RALN) and 156–198 (GTWV…RRVR). The tract at residues 200–211 (QQWHQRGSFENS) is C-terminal arm.

The protein belongs to the beta/gamma-crystallin family. In terms of assembly, homo/heterodimer, or complexes of higher-order. The structure of beta-crystallin oligomers seems to be stabilized through interactions between the N-terminal arms.

In terms of biological role, crystallins are the dominant structural components of the vertebrate eye lens. The sequence is that of Beta-crystallin B3 (CRYBB3) from Gallus gallus (Chicken).